Here is a 422-residue protein sequence, read N- to C-terminus: Glucose-1-phosphate adenylyltransferase (422 aa).

Residues Tyr-110, Gly-175, 190–191, and Ser-208 each bind alpha-D-glucose 1-phosphate; that span reads EK.

This sequence belongs to the bacterial/plant glucose-1-phosphate adenylyltransferase family. In terms of assembly, homotetramer.

The catalysed reaction is alpha-D-glucose 1-phosphate + ATP + H(+) = ADP-alpha-D-glucose + diphosphate. Its pathway is glycan biosynthesis; glycogen biosynthesis. Its function is as follows. Involved in the biosynthesis of ADP-glucose, a building block required for the elongation reactions to produce glycogen. Catalyzes the reaction between ATP and alpha-D-glucose 1-phosphate (G1P) to produce pyrophosphate and ADP-Glc. This chain is Glucose-1-phosphate adenylyltransferase, found in Hydrogenovibrio crunogenus (strain DSM 25203 / XCL-2) (Thiomicrospira crunogena).